The primary structure comprises 168 residues: DAZ-associated protein 2 (168 aa).

Low complexity predominate over residues 1-13; sequence MNSKGQYPTQPTY. The interval 1–25 is disordered; the sequence is MNSKGQYPTQPTYPVQPPGNPVYPQ. Positions 39–42 match the PPAY motif; sequence PPAY. Position 77 is a phosphoserine (Ser-77).

Interacts with SOX6. Interacts with DAZ1 and DAZL. Interacts with IL17RB. May interact with FAM168B. Interacts with INCA1. Interacts with EIF4G1 and EIF4G2. Interacts (via PPAY motif) with NEDD4 (via WW domains). Interacts with transcription factor TCF4; the interaction results in localization of DAZAP2 to the nucleus. Interacts with transcription factors TCF7 and TCF7L1. Interacts with transcription factor LEF1. Interacts with serine/threonine-protein kinase HIPK2; the interaction results in phosphorylation of DAZAP2 which causes localization of DAZAP2 to the nucleus, reduces interaction of DAZAP2 with HIPK2 and prevents DAZAP2-dependent degradation of HIPK2. Interacts with ubiquitin ligase SIAH1; the interaction is decreased following phosphorylation of DAZAP2 by HIPK2. Interacts with TP53; the interaction is triggered by DNA damage. Post-translationally, ubiquitinated by SMURF2, leading to proteasomal degradation. Ubiquitinated by NEDD4, leading to proteasomal degradation. In terms of processing, following DNA damage, phosphorylated by HIPK2 which promotes DAZAP2 localization to the nucleus, reduces interaction of DAZAP2 with HIPK2 and SIAH1, and prevents DAZAP2-dependent ubiquitination of HIPK2 by E3 ubiquitin-protein ligase SIAH1 and subsequent HIPK2 proteasomal degradation.

The protein resides in the cytoplasm. The protein localises to the nucleus. Its subcellular location is the nucleus speckle. It is found in the nuclear body. It localises to the stress granule. In unstressed cells, promotes SIAH1-mediated polyubiquitination and degradation of the serine/threonine-protein kinase HIPK2, probably by acting as a loading factor that potentiates complex formation between HIPK2 and ubiquitin ligase SIAH1. In response to DNA damage, localizes to the nucleus following phosphorylation by HIPK2 and modulates the expression of a subset of TP53/p53 target genes by binding to TP53 at target gene promoters. This limits the expression of a number of cell death-mediating TP53 target genes, reducing DNA damage-induced cell death. Enhances the binding of transcription factor TCF7L2/TCF4, a Wnt signaling pathway effector, to the promoters of target genes. Plays a role in stress granule formation. The sequence is that of DAZ-associated protein 2 from Rattus norvegicus (Rat).